The following is a 60-amino-acid chain: Potassium channel toxin Tst-beta-KTx (60 aa).

The 35-residue stretch at 26 to 60 (QFGCPAYEGYCNDHCNDIERKDGECHGFKCKCAKD) folds into the BetaSPN-type CS-alpha/beta domain. Disulfide bonds link Cys29-Cys50, Cys36-Cys55, and Cys40-Cys57.

The protein belongs to the long chain scorpion toxin family. Class 1 subfamily. In terms of tissue distribution, expressed by the venom gland.

Its subcellular location is the secreted. Its function is as follows. Inhibits voltage-gated potassium channels Kv1.1/KCNA1, Kv1.2/KCNA2, and Kv1.3/KCNA3. Functionally, does not induce hemolytic activity, lactate dehydrogenase (LDH) release from mast cells, mast cell degranulation, and antimicrobial effects. In vivo, injection into mice causes moderate edema formation, but induces very weak or no change in nociceptive sensibility. It also reduces mice locomotion, suggesting an increase in anxiety, but causes no alteration in rearing (standing on hind limbs). The polypeptide is Potassium channel toxin Tst-beta-KTx (Tityus stigmurus (Brazilian scorpion)).